Consider the following 140-residue polypeptide: MLKTISPLISPTLLKVLAEMGHGDEIIFSDAHFPAHSLGPQVIRADGLSVSDLLRAIIPLFELDSYAPPLVMMAAVEGDTLDPNVEARYRDALSLEAPCPDIVRIDRYAFYERAQKAFAIVITGECAKYGNILLKKGVTP.

The active-site Proton donor is the H22. Substrate-binding positions include D30, R107, and Y129–N131.

It belongs to the RbsD / FucU family. FucU mutarotase subfamily. In terms of assembly, homodecamer.

The protein resides in the cytoplasm. It carries out the reaction alpha-L-fucose = beta-L-fucose. Its pathway is carbohydrate metabolism; L-fucose metabolism. Involved in the anomeric conversion of L-fucose. The protein is L-fucose mutarotase of Salmonella typhimurium (strain LT2 / SGSC1412 / ATCC 700720).